The sequence spans 705 residues: 3-hydroxypropionate--CoA ligase [ADP-forming] (705 aa).

Residues 25-61 form the ATP-grasp domain; sequence KSILKNYGVKVPPYALVTSAEEAAKEAKKIGFPLVMK. Position 51-61 (51-61) interacts with ATP; it reads AKKIGFPLVMK.

In the N-terminal section; belongs to the acetate CoA ligase beta subunit family. The protein in the C-terminal section; belongs to the acetate CoA ligase alpha subunit family. Mg(2+) serves as cofactor. It depends on Mn(2+) as a cofactor.

The catalysed reaction is 3-hydroxypropanoate + ATP + CoA = 3-hydroxypropanoyl-CoA + ADP + phosphate. Involved in thaumarchaeal hydroxypropionate/hydroxybutyrate (HP/HB) cycle, a modified version of the autotrophic HP/HB cycle of Crenarchaeota. Catalyzes the formation of 3-hydroxypropionyl-CoA, ADP and phosphate from 3-hydroxypropionate, coenzyme A (CoA) and ATP. Can also use 4-hydroxybutyrate, propionate and butyrate, with poor catalytic efficiency. This Nitrosopumilus maritimus (strain SCM1) protein is 3-hydroxypropionate--CoA ligase [ADP-forming].